Consider the following 586-residue polypeptide: Ezrin (586 aa).

The FERM domain maps to 2-295; the sequence is PKPINVRVTT…GNHELYMRRR (294 aa). The residue at position 60 (K60) is an N6-acetyllysine. Residues 115–120 carry the [IL]-x-C-x-x-[DE] motif motif; sequence IYCPPE. Phosphotyrosine; by PDGFR is present on Y146. The interaction with SCYL3 stretch occupies residues 244–586; that stretch reads EIRNISFNDK…KQRIDEFEAM (343 aa). The stretch at 302–462 forms a coiled coil; that stretch reads VQQMKAQARE…QDDLVKTKEE (161 aa). The interval 306–338 is disordered; the sequence is KAQAREEKHQKQLERQQLETEKKRRETVEREKE. The span at 308–338 shows a compositional bias: basic and acidic residues; the sequence is QAREEKHQKQLERQQLETEKKRRETVEREKE. Y354 carries the post-translational modification Phosphotyrosine; by PDGFR. S366 is subject to Phosphoserine. Y478 is subject to Phosphotyrosine. Positions 534-565 are disordered; that stretch reads LSNELSQARDENKRTHNDIIHNENMRQGRDKY. The residue at position 535 (S535) is a Phosphoserine. A compositionally biased stretch (basic and acidic residues) spans 540-565; it reads QARDENKRTHNDIIHNENMRQGRDKY. Position 567 is a phosphothreonine; by ROCK2 and PKC/PRKCI (T567).

Interacts with PALS1 and NHERF2. Found in a complex with EZR, PODXL and NHERF2. Interacts with MCC, PLEKHG6, PODXL, SCYL3/PACE1, NHERF1 and TMEM8B. Interacts (when phosphorylated) with FES/FPS. Interacts with dimeric S100P, the interaction may be activating through unmasking of F-actin binding sites. Identified in complexes that contain VIM, EZR, AHNAK, BFSP1, BFSP2, ANK2, PLEC, PRX and spectrin. Detected in a complex composed of at least EZR, AHNAK, PPL and PRX. Interacts with PDPN (via cytoplasmic domain); activates RHOA and promotes epithelial-mesenchymal transition. Interacts with SPN/CD43 cytoplasmic tail. Interacts with CD44 and ICAM2. Interacts with SLC9A3; interaction targets SLC9A3 to the apical membrane. Interacts with SLC9A1; regulates interactions of SLC9A1 with cytoskeletal and promotes stress fiber formation. Interacts with CLIC5; may work together in a complex which also includes RDX and MYO6 to stabilize linkages between the plasma membrane and subjacent actin cytoskeleton at the base of stereocilia. Post-translationally, phosphorylated by tyrosine-protein kinases. Phosphorylation by ROCK2 suppresses the head-to-tail association of the N-terminal and C-terminal halves resulting in an opened conformation which is capable of actin and membrane-binding. In terms of processing, S-nitrosylation is induced by interferon-gamma and oxidatively-modified low-densitity lipoprotein (LDL(ox)) possibly implicating the iNOS-S100A8/9 transnitrosylase complex. In terms of tissue distribution, detected in eye lens fiber cells. Expressed in cerebrum and cerebellum (at protein level). Component of the microvilli of intestinal epithelial cells.

Its subcellular location is the apical cell membrane. The protein localises to the cell projection. The protein resides in the microvillus membrane. It localises to the ruffle membrane. It is found in the cytoplasm. Its subcellular location is the cell cortex. The protein localises to the cytoskeleton. The protein resides in the microvillus. Its activity is regulated as follows. A head-to-tail association, of the N-terminal and C-terminal halves results in a closed conformation (inactive form) which is incapable of actin or membrane-binding. Probably involved in connections of major cytoskeletal structures to the plasma membrane. In epithelial cells, required for the formation of microvilli and membrane ruffles on the apical pole. Along with PLEKHG6, required for normal macropinocytosis. The protein is Ezrin (Ezr) of Mus musculus (Mouse).